Consider the following 468-residue polypeptide: MKPTLVLVGRPNVGKSTLFNRLTRSRDAIVADIPGLTRDRHYGHGRLGLKPYLVVDTGGFEPVVKSGILHAMARQTLQAVDEADVVLFIVDGRQGLASQDKIIADQLRKTGRKIILVVNKAEGMPYSTAAVEFHELGLGTPCVVSALHGEHLGELIDFALEDYPYAEDIEAEPGQEKHPVIAIAGRPNVGKSTLINTLLGEERMIAFDQPGTTRDSIYIDFEYGQRRYTLIDTAGLRRSGKVWETVEKFSVVKTLQSIEAANVVVLVLDAQSGISEQDAHIAGFILETGRALVIAINKWDGMDDYQRDTTKREFERKLAFLNFANLHYISALYGNGVKALMPSVDAAYTAAMAHIPTPKLTRVMLAAVAKQQPPRGGVSRPKLRYAHQGGENPPLIIVHGSMLDHVPQTYRRYLENTFRDVFELKGTPLRVEFRTGHNPYAGKKAPPLTEEEARRAHSRRRRNRKKYG.

EngA-type G domains lie at 3–167 (PTLV…PYAE) and 179–352 (PVIA…TAAM). GTP contacts are provided by residues 9–16 (GRPNVGKS), 56–60 (DTGGF), 119–122 (NKAE), 185–192 (GRPNVGKS), 232–236 (DTAGL), and 297–300 (NKWD). Residues 353 to 437 (AHIPTPKLTR…PLRVEFRTGH (85 aa)) form the KH-like domain. Positions 434 to 468 (RTGHNPYAGKKAPPLTEEEARRAHSRRRRNRKKYG) are disordered. Residues 456–468 (AHSRRRRNRKKYG) are compositionally biased toward basic residues.

The protein belongs to the TRAFAC class TrmE-Era-EngA-EngB-Septin-like GTPase superfamily. EngA (Der) GTPase family. As to quaternary structure, associates with the 50S ribosomal subunit.

Functionally, GTPase that plays an essential role in the late steps of ribosome biogenesis. This is GTPase Der from Nitrosomonas eutropha (strain DSM 101675 / C91 / Nm57).